The following is a 278-amino-acid chain: Probable 3-hydroxybutyryl-CoA dehydrogenase (278 aa).

It belongs to the 3-hydroxyacyl-CoA dehydrogenase family.

It carries out the reaction (3S)-3-hydroxybutanoyl-CoA + NADP(+) = acetoacetyl-CoA + NADPH + H(+). The protein operates within lipid metabolism; butanoate metabolism. This chain is Probable 3-hydroxybutyryl-CoA dehydrogenase (hbd), found in Deinococcus radiodurans (strain ATCC 13939 / DSM 20539 / JCM 16871 / CCUG 27074 / LMG 4051 / NBRC 15346 / NCIMB 9279 / VKM B-1422 / R1).